The sequence spans 345 residues: Nicotinate-nucleotide--dimethylbenzimidazole phosphoribosyltransferase (345 aa).

The active-site Proton acceptor is glutamate 311.

Belongs to the CobT family.

It catalyses the reaction 5,6-dimethylbenzimidazole + nicotinate beta-D-ribonucleotide = alpha-ribazole 5'-phosphate + nicotinate + H(+). It functions in the pathway nucleoside biosynthesis; alpha-ribazole biosynthesis; alpha-ribazole from 5,6-dimethylbenzimidazole: step 1/2. Catalyzes the synthesis of alpha-ribazole-5'-phosphate from nicotinate mononucleotide (NAMN) and 5,6-dimethylbenzimidazole (DMB). The sequence is that of Nicotinate-nucleotide--dimethylbenzimidazole phosphoribosyltransferase from Janthinobacterium sp. (strain Marseille) (Minibacterium massiliensis).